Consider the following 380-residue polypeptide: Cytochrome b (380 aa).

The next 4 membrane-spanning stretches (helical) occupy residues 34 to 54, 78 to 99, 114 to 134, and 179 to 199; these read FGSLLGICLATQILTGLLLAA, WLIRNLHANGASFFFICIYLHI, WNTGVILLLTLMATAFVGYVL, and FFTLHFLLPFMIMGLTLIHLT. Residues His84 and His98 each coordinate heme b. 2 residues coordinate heme b: His183 and His197. His202 contributes to the a ubiquinone binding site. Helical transmembrane passes span 227–247, 289–309, 321–341, and 348–368; these read LKDILGFTLMLLPLMTLALFS, LGGVLALAASVLILFLAPLLH, FSQLLFWTLAANLLILTWVGS, and FIIIGQLASLTYFTILLILFP.

It belongs to the cytochrome b family. In terms of assembly, the cytochrome bc1 complex contains 11 subunits: 3 respiratory subunits (MT-CYB, CYC1 and UQCRFS1), 2 core proteins (UQCRC1 and UQCRC2) and 6 low-molecular weight proteins (UQCRH/QCR6, UQCRB/QCR7, UQCRQ/QCR8, UQCR10/QCR9, UQCR11/QCR10 and a cleavage product of UQCRFS1). This cytochrome bc1 complex then forms a dimer. Requires heme b as cofactor.

It localises to the mitochondrion inner membrane. Component of the ubiquinol-cytochrome c reductase complex (complex III or cytochrome b-c1 complex) that is part of the mitochondrial respiratory chain. The b-c1 complex mediates electron transfer from ubiquinol to cytochrome c. Contributes to the generation of a proton gradient across the mitochondrial membrane that is then used for ATP synthesis. This chain is Cytochrome b (MT-CYB), found in Antigone antigone (Sarus crane).